Reading from the N-terminus, the 517-residue chain is Maturase K (517 aa).

This sequence belongs to the intron maturase 2 family. MatK subfamily.

Its subcellular location is the plastid. It is found in the chloroplast. Its function is as follows. Usually encoded in the trnK tRNA gene intron. Probably assists in splicing its own and other chloroplast group II introns. This Trillium grandiflorum (Large-flowered trillium) protein is Maturase K.